Here is a 101-residue protein sequence, read N- to C-terminus: Small ribosomal subunit protein uS14 (101 aa).

It belongs to the universal ribosomal protein uS14 family. Part of the 30S ribosomal subunit. Contacts proteins S3 and S10.

In terms of biological role, binds 16S rRNA, required for the assembly of 30S particles and may also be responsible for determining the conformation of the 16S rRNA at the A site. This Burkholderia lata (strain ATCC 17760 / DSM 23089 / LMG 22485 / NCIMB 9086 / R18194 / 383) protein is Small ribosomal subunit protein uS14.